The chain runs to 414 residues: Capsid protein (414 aa).

Polar residues predominate over residues 1–14 (MTSNGSQPQASTPM). Disordered regions lie at residues 1–60 (MTSN…APTA), 94–127 (AQNE…ASMN), and 148–212 (YPTF…NTGG). 2 stretches are compositionally biased toward low complexity: residues 15 to 27 (VSAE…ASVP) and 38 to 60 (PAAA…APTA). Composition is skewed to polar residues over residues 113–127 (LPSS…ASMN), 153–166 (GSGS…QRIF), and 185–197 (QATS…TPFT).

The protein localises to the virion. The protein is Capsid protein of Crataegus (hawthorn).